We begin with the raw amino-acid sequence, 1090 residues long: Leucine--tRNA ligase, cytoplasmic (1090 aa).

Residue S2 is modified to N-acetylserine. Residues 66–76 (PYMNGVMHAGH) carry the 'HIGH' region motif. T142 bears the Phosphothreonine mark. The short motif at 729-733 (KMSKS) is the 'KMSKS' region element. Residue K732 participates in ATP binding.

This sequence belongs to the class-I aminoacyl-tRNA synthetase family.

It localises to the cytoplasm. It catalyses the reaction tRNA(Leu) + L-leucine + ATP = L-leucyl-tRNA(Leu) + AMP + diphosphate. This chain is Leucine--tRNA ligase, cytoplasmic (CDC60), found in Saccharomyces cerevisiae (strain ATCC 204508 / S288c) (Baker's yeast).